Reading from the N-terminus, the 1083-residue chain is RecBCD enzyme subunit RecB (1083 aa).

The region spanning 1 to 323 (MKVFDLLGPL…QTLGTNWRSD (323 aa)) is the UvrD-like helicase ATP-binding domain. The tract at residues 1-704 (MKVFDLLGPL…RGRAPGEAIV (704 aa)) is DNA-binding and helicase activity, interacts with RecC. Residue 21–28 (ASAGTGKT) participates in ATP binding. Residues 349 to 607 (VQARHQGHRL…QIMTVWVSKG (259 aa)) enclose the UvrD-like helicase C-terminal domain. Residues 765–1083 (AWKRTSYSGL…LSKLLDAEAP (319 aa)) form a nuclease activity, interacts with RecD and RecA region. Residues His830, Asp962, and Asp975 each coordinate Mg(2+). The active-site For nuclease activity is the Asp975.

Belongs to the helicase family. UvrD subfamily. In terms of assembly, heterotrimer of RecB, RecC and RecD. All subunits contribute to DNA-binding. Interacts with RecA. It depends on Mg(2+) as a cofactor.

The catalysed reaction is Exonucleolytic cleavage (in the presence of ATP) in either 5'- to 3'- or 3'- to 5'-direction to yield 5'-phosphooligonucleotides.. It catalyses the reaction Couples ATP hydrolysis with the unwinding of duplex DNA by translocating in the 3'-5' direction.. It carries out the reaction ATP + H2O = ADP + phosphate + H(+). A helicase/nuclease that prepares dsDNA breaks (DSB) for recombinational DNA repair. Binds to DSBs and unwinds DNA via a highly rapid and processive ATP-dependent bidirectional helicase activity. Holoenzyme degrades any linearized DNA that is unable to undergo homologous recombination. In the holoenzyme this subunit contributes DNA-dependent ATPase activity, exonuclease activity and 3'-5' helicase activity. Unlike the case in E.coli, suppresses RecA-dependent homologous recombination, is instead required for single-strand annealing pathway repair of DSB. The sequence is that of RecBCD enzyme subunit RecB from Mycolicibacterium smegmatis (strain ATCC 700084 / mc(2)155) (Mycobacterium smegmatis).